Reading from the N-terminus, the 510-residue chain is Solute carrier family 2, facilitated glucose transporter member 2 (510 aa).

Over 1–10 the chain is Cytoplasmic; sequence MTEDKVTGTL. The chain crosses the membrane as a helical span at residues 11–31; the sequence is VLAVFTAVLSSFQFGYDIGVI. At 32–96 the chain is on the extracellular side; it reads NAPQQVIITH…SASLITMFWS (65 aa). N-linked (GlcNAc...) asparagine glycosylation occurs at Asn-62. A helical membrane pass occupies residues 97–117; it reads LSVSSFAVGGMIASFFGGLLG. At 118–122 the chain is on the cytoplasmic side; the sequence is DKLGR. Residues 123–143 form a helical membrane-spanning segment; that stretch reads IKALLVANILSLVGALLMGFS. Over 144 to 157 the chain is Extracellular; the sequence is KLGPSHILIISGRG. A helical membrane pass occupies residues 158–178; it reads ISGLYCGLISGLIPMYIGEIA. The Cytoplasmic portion of the chain corresponds to 179-191; the sequence is PTTLRGAIGALHQ. Gln-191 lines the D-glucose pocket. A helical transmembrane segment spans residues 192-212; it reads LAIVTGILISQIVGLDFILGN. Over 213 to 215 the chain is Extracellular; the sequence is HEL. A helical membrane pass occupies residues 216–236; that stretch reads WHILLGLSAVPAILQCLLLFF. At 237–301 the chain is on the cytoplasmic side; the sequence is CPESPRYLYI…LFTNASYRQP (65 aa). The helical transmembrane segment at 302–322 threads the bilayer; the sequence is ILVALMLHAAQQFSGINGIFY. D-glucose is bound by residues 312–313 and Asn-318; that span reads QQ. Over 323–336 the chain is Extracellular; that stretch reads YSTSIFQTAGISQP. A helical transmembrane segment spans residues 337–357; sequence VYATIGVGAVNTVFTAVSVFL. Asn-347 provides a ligand contact to D-glucose. The Cytoplasmic segment spans residues 358–365; the sequence is VEKAGRRS. The chain crosses the membrane as a helical span at residues 366–386; it reads LFLIGMSGMFVCAIFMSVGLV. Residues 387-400 lie on the Extracellular side of the membrane; sequence LLSKFPWMNYVSMT. Residues 401-421 traverse the membrane as a helical segment; that stretch reads AIFLFVSFFEIGPGPIPWFMV. D-glucose contacts are provided by Glu-410 and Trp-418. Over 422 to 431 the chain is Cytoplasmic; the sequence is AEFFSQGPRP. The helical transmembrane segment at 432–452 threads the bilayer; that stretch reads AALAIAAFSNWTGNFIIALCF. Residues 453–454 are Extracellular-facing; sequence QY. A helical transmembrane segment spans residues 455–475; it reads IADFCGPYVFFLLLVWSWPLF. The Cytoplasmic segment spans residues 476–510; that stretch reads CSHFLKFQKPKENPLRKSQQSSERRGVQLKRQKLL. Residues 490–510 are disordered; sequence LRKSQQSSERRGVQLKRQKLL.

Belongs to the major facilitator superfamily. Sugar transporter (TC 2.A.1.1) family. Glucose transporter subfamily. N-glycosylated; required for stability and retention at the cell surface of pancreatic beta cells.

Its subcellular location is the cell membrane. The catalysed reaction is D-glucose(out) = D-glucose(in). The enzyme catalyses D-fructose(out) = D-fructose(in). It catalyses the reaction L-dehydroascorbate(out) = L-dehydroascorbate(in). It carries out the reaction D-galactose(in) = D-galactose(out). D-glucose and maltose competitively inhibit fructose transport. D-glucose, D-fructose and maltose inhibit deoxyglucose transport. Facilitative hexose transporter that mediates the transport of glucose, fructose and galactose. Likely mediates the bidirectional transfer of glucose across the plasma membrane of hepatocytes and is responsible for uptake of glucose by the beta cells; may comprise part of the glucose-sensing mechanism of the beta cell. May also participate with the Na(+)/glucose cotransporter in the transcellular transport of glucose in the small intestine and kidney. Also able to mediate the transport of dehydroascorbate. The sequence is that of Solute carrier family 2, facilitated glucose transporter member 2 from Bos taurus (Bovine).